A 201-amino-acid chain; its full sequence is Kinetochore protein SPC24 homolog (201 aa).

A coiled-coil region spans residues 78–133 (DIAAEDEIERLQKELDEEMEREFKLKDELRLVADELKDLNAQLSSIDEHKQSTKRK).

It belongs to the SPC24 family. As to quaternary structure, component of the NDC80 complex, which consists of NDC80, NUF2, SPC24 and SPC25. Highly expressed in actively dividing tissues, such as shoot apical meristem (SAM), root apical meristem (RAM), vasculature, newly emerging leaves and inflorescence shoots.

Its subcellular location is the chromosome. It is found in the centromere. In terms of biological role, acts as a component of the essential kinetochore-associated NDC80 complex, which is required for chromosome segregation and spindle checkpoint activity to ensure proper cell division. Required for the maintenance of plant architecture. The sequence is that of Kinetochore protein SPC24 homolog from Arabidopsis thaliana (Mouse-ear cress).